The sequence spans 391 residues: GTPase Obg (391 aa).

The Obg domain occupies 1–159 (MKFIDEALIR…RDLLLELMLL (159 aa)). Residues 160–333 (ADVGMLGLPN…LTRDIMDFIE (174 aa)) form the OBG-type G domain. Residues 166 to 173 (GLPNAGKS), 191 to 195 (FTTLV), 213 to 216 (DIPG), 283 to 286 (NKID), and 314 to 316 (SAA) each bind GTP. Mg(2+)-binding residues include serine 173 and threonine 193.

This sequence belongs to the TRAFAC class OBG-HflX-like GTPase superfamily. OBG GTPase family. Monomer. Mg(2+) serves as cofactor.

The protein resides in the cytoplasm. An essential GTPase which binds GTP, GDP and possibly (p)ppGpp with moderate affinity, with high nucleotide exchange rates and a fairly low GTP hydrolysis rate. Plays a role in control of the cell cycle, stress response, ribosome biogenesis and in those bacteria that undergo differentiation, in morphogenesis control. This Haemophilus ducreyi (strain 35000HP / ATCC 700724) protein is GTPase Obg.